Consider the following 509-residue polypeptide: ATP synthase subunit alpha (509 aa).

169–176 (GDRQTGKT) provides a ligand contact to ATP.

Belongs to the ATPase alpha/beta chains family. F-type ATPases have 2 components, CF(1) - the catalytic core - and CF(0) - the membrane proton channel. CF(1) has five subunits: alpha(3), beta(3), gamma(1), delta(1), epsilon(1). CF(0) has three main subunits: a(1), b(2) and c(9-12). The alpha and beta chains form an alternating ring which encloses part of the gamma chain. CF(1) is attached to CF(0) by a central stalk formed by the gamma and epsilon chains, while a peripheral stalk is formed by the delta and b chains.

The protein resides in the cell inner membrane. The catalysed reaction is ATP + H2O + 4 H(+)(in) = ADP + phosphate + 5 H(+)(out). Functionally, produces ATP from ADP in the presence of a proton gradient across the membrane. The alpha chain is a regulatory subunit. The protein is ATP synthase subunit alpha of Paramagnetospirillum magneticum (strain ATCC 700264 / AMB-1) (Magnetospirillum magneticum).